Here is a 281-residue protein sequence, read N- to C-terminus: Glyoxalase 1 (281 aa).

VOC domains are found at residues 4 to 127 (RALH…IGKA) and 132 to 251 (KVLR…FVGD).

It belongs to the glyoxalase I family. As to expression, expressed in the following tissues in both larvae and adults: pharynx, pharyngeal-intestinal valve, intestine, anal sphincter, vulval muscle, seam cells and the nervous system.

Functionally, thought to act as a glyoxalase. May remove methylglyoxal from mitochondrial proteins. Has roles in reducing oxidative stress and increasing lifespan. This is Glyoxalase 1 (glod-4) from Caenorhabditis elegans.